We begin with the raw amino-acid sequence, 381 residues long: Cytochrome b (381 aa).

A run of 4 helical transmembrane segments spans residues 33–53 (FGSLLGICLIIQILTGLFLAM), 77–98 (WLLRNLHANGASMFFMCLFLHV), 113–133 (WNIGVILLLTVMATAFVGYVL), and 178–198 (FFAFHFILPFIIVAFAAVHLL). Positions 83 and 97 each coordinate heme b. Heme b contacts are provided by histidine 182 and histidine 196. Histidine 201 contacts a ubiquinone. Helical transmembrane passes span 226–246 (IKDALGLIFLILSLLLLGLFS), 288–308 (LGGVLALLASILILLIIPLLH), 320–340 (IFQTLFWILTADLITLTWIGG), and 347–367 (FIIIGQLALMLYFLLILALMP).

Belongs to the cytochrome b family. As to quaternary structure, the cytochrome bc1 complex contains 11 subunits: 3 respiratory subunits (MT-CYB, CYC1 and UQCRFS1), 2 core proteins (UQCRC1 and UQCRC2) and 6 low-molecular weight proteins (UQCRH/QCR6, UQCRB/QCR7, UQCRQ/QCR8, UQCR10/QCR9, UQCR11/QCR10 and a cleavage product of UQCRFS1). This cytochrome bc1 complex then forms a dimer. It depends on heme b as a cofactor.

The protein resides in the mitochondrion inner membrane. Component of the ubiquinol-cytochrome c reductase complex (complex III or cytochrome b-c1 complex) that is part of the mitochondrial respiratory chain. The b-c1 complex mediates electron transfer from ubiquinol to cytochrome c. Contributes to the generation of a proton gradient across the mitochondrial membrane that is then used for ATP synthesis. The protein is Cytochrome b (MT-CYB) of Dasykaluta rosamondae (Little red marsupial mouse).